Consider the following 354-residue polypeptide: Ornithine transcarbamylase, mitochondrial (354 aa).

The N-terminal 32 residues, 1 to 32 (MLFHLRTLLNNAALRNGHNFVVRNFRCGQPLQ), are a transit peptide targeting the mitochondrion. Position 70 is an N6-acetyllysine; alternate (Lys70). Lys70 is subject to N6-succinyllysine; alternate. N6-succinyllysine is present on Lys80. Lys88 is subject to N6-acetyllysine; alternate. Lys88 carries the N6-succinyllysine; alternate modification. Ser133 is modified (phosphoserine). Residues Lys144, Lys221, Lys231, and Lys238 each carry the N6-acetyllysine; alternate modification. N6-succinyllysine; alternate occurs at positions 144, 221, 231, and 238. Lys243 carries the N6-acetyllysine modification. The active site involves Asp263. Residues Lys274 and Lys289 each carry the N6-succinyllysine modification. An N6-acetyllysine; alternate modification is found at Lys292. Position 292 is an N6-succinyllysine; alternate (Lys292). The active site involves Cys303. The residue at position 307 (Lys307) is an N6-acetyllysine; alternate. Lys307 is subject to N6-succinyllysine; alternate.

Belongs to the aspartate/ornithine carbamoyltransferase superfamily. OTCase family. Homotrimer. In terms of processing, acetylation at Lys-88 negatively regulates ornithine carbamoyltransferase activity in response to nutrient signals.

It is found in the mitochondrion matrix. The catalysed reaction is carbamoyl phosphate + L-ornithine = L-citrulline + phosphate + H(+). It functions in the pathway nitrogen metabolism; urea cycle; L-citrulline from L-ornithine and carbamoyl phosphate: step 1/1. Its activity is regulated as follows. Negatively regulated by lysine acetylation. Catalyzes the second step of the urea cycle, the condensation of carbamoyl phosphate with L-ornithine to form L-citrulline. The urea cycle ensures the detoxification of ammonia by converting it to urea for excretion. This Bos taurus (Bovine) protein is Ornithine transcarbamylase, mitochondrial.